The primary structure comprises 156 residues: Small ribosomal subunit protein uS7 (156 aa).

This sequence belongs to the universal ribosomal protein uS7 family. In terms of assembly, part of the 30S ribosomal subunit. Contacts proteins S9 and S11.

Its function is as follows. One of the primary rRNA binding proteins, it binds directly to 16S rRNA where it nucleates assembly of the head domain of the 30S subunit. Is located at the subunit interface close to the decoding center, probably blocks exit of the E-site tRNA. The polypeptide is Small ribosomal subunit protein uS7 (Lactobacillus delbrueckii subsp. bulgaricus (strain ATCC 11842 / DSM 20081 / BCRC 10696 / JCM 1002 / NBRC 13953 / NCIMB 11778 / NCTC 12712 / WDCM 00102 / Lb 14)).